The primary structure comprises 224 residues: Pro-thyrotropin-releasing hormone-B (224 aa).

An N-terminal signal peptide occupies residues 1 to 15; it reads MMFLWWLLLLGTAIS. Q75 carries the post-translational modification Pyrrolidone carboxylic acid. P77 is subject to Proline amide. The span at 86–101 shows a compositional bias: basic and acidic residues; it reads EKRQHPGKRDLEDLQL. 2 disordered regions span residues 86–131 and 150–212; these read EKRQ…DWSR and RQHP…NSGN. At Q89 the chain carries Pyrrolidone carboxylic acid. P91 carries the proline amide modification. Residue Q105 is modified to Pyrrolidone carboxylic acid. The residue at position 107 (P107) is a Proline amide. A compositionally biased stretch (basic and acidic residues) spans 110-129; sequence RYLEDMEKRQHPGKREEGDW. Residue Q119 is modified to Pyrrolidone carboxylic acid. Position 121 is a proline amide (P121). Residue Q151 is modified to Pyrrolidone carboxylic acid. Position 153 is a proline amide (P153). At Q166 the chain carries Pyrrolidone carboxylic acid. P168 is modified (proline amide). The segment covering 182 to 199 has biased composition (basic and acidic residues); that stretch reads ENSKEVGKRQHPGKRYDP. Q191 is modified (pyrrolidone carboxylic acid). Residue P193 is modified to Proline amide.

It belongs to the TRH family.

The protein resides in the secreted. The protein is Pro-thyrotropin-releasing hormone-B (trh-b) of Xenopus laevis (African clawed frog).